Here is a 338-residue protein sequence, read N- to C-terminus: Ornithine carbamoyltransferase (338 aa).

Carbamoyl phosphate-binding positions include Arg-116 and 143–146; that span reads HPCQ. L-ornithine is bound by residues Asn-174, Asp-235, and 239-240; that span reads SM. Cys-275 and Arg-303 together coordinate carbamoyl phosphate.

This sequence belongs to the aspartate/ornithine carbamoyltransferase superfamily. OTCase family.

The protein resides in the cytoplasm. It catalyses the reaction carbamoyl phosphate + L-ornithine = L-citrulline + phosphate + H(+). The protein operates within amino-acid biosynthesis; L-arginine biosynthesis; L-arginine from L-ornithine and carbamoyl phosphate: step 1/3. Its function is as follows. Reversibly catalyzes the transfer of the carbamoyl group from carbamoyl phosphate (CP) to the N(epsilon) atom of ornithine (ORN) to produce L-citrulline. In Chlorobaculum tepidum (strain ATCC 49652 / DSM 12025 / NBRC 103806 / TLS) (Chlorobium tepidum), this protein is Ornithine carbamoyltransferase.